The chain runs to 180 residues: Large ribosomal subunit protein uL5 (180 aa).

It belongs to the universal ribosomal protein uL5 family. As to quaternary structure, part of the 50S ribosomal subunit; part of the 5S rRNA/L5/L18/L25 subcomplex. Contacts the 5S rRNA and the P site tRNA. Forms a bridge to the 30S subunit in the 70S ribosome.

This is one of the proteins that bind and probably mediate the attachment of the 5S RNA into the large ribosomal subunit, where it forms part of the central protuberance. In the 70S ribosome it contacts protein S13 of the 30S subunit (bridge B1b), connecting the 2 subunits; this bridge is implicated in subunit movement. Contacts the P site tRNA; the 5S rRNA and some of its associated proteins might help stabilize positioning of ribosome-bound tRNAs. This is Large ribosomal subunit protein uL5 from Gloeothece citriformis (strain PCC 7424) (Cyanothece sp. (strain PCC 7424)).